We begin with the raw amino-acid sequence, 450 residues long: Tyrosine-protein kinase CSK (450 aa).

The residue at position 2 (serine 2) is an N-acetylserine. Residues proline 9–glycine 70 enclose the SH3 domain. The interval proline 9–glycine 70 is interaction with PTPN22. The SH2 domain occupies tryptophan 82–lysine 171. At tyrosine 184 the chain carries Phosphotyrosine. A Protein kinase domain is found at leucine 195 to histidine 449. ATP is bound by residues isoleucine 201–valine 209 and lysine 222. A Phosphotyrosine modification is found at tyrosine 304. Residue aspartate 314 is the Proton acceptor of the active site. Position 364 is a phosphoserine; by PKA (serine 364). Phosphotyrosine; by autocatalysis is present on tyrosine 416.

It belongs to the protein kinase superfamily. Tyr protein kinase family. CSK subfamily. In terms of assembly, homodimer (via SH3-domain). Interacts with PTPN22. Interacts with phosphorylated SIT1, PAG1, LIME1 and TGFB1I1; these interactions serve to recruit CSK to the membrane where it can phosphorylate and inhibit Src-family kinases. Interacts with SRCIN1. Interacts with RHOH. Interacts (via SH2 domain) with SCIMP; this interaction is dependent on phosphorylation of SCIMP 'Tyr-107'. Interacts (via SH2 domain) with PRAG1 (when phosphorylated at 'Tyr-391'); this interaction prevents translocation of CSK from the cytoplasm to the membrane leading to increased activity of CSK. Interacts with LRRK1. The cofactor is Mg(2+). Mn(2+) serves as cofactor. In terms of processing, phosphorylated at Ser-364 by PKA, leading to increased activity. Autophosphorylated. In terms of tissue distribution, expressed in lung and macrophages.

Its subcellular location is the cytoplasm. It localises to the cell membrane. The enzyme catalyses L-tyrosyl-[protein] + ATP = O-phospho-L-tyrosyl-[protein] + ADP + H(+). Functionally, non-receptor tyrosine-protein kinase that plays an important role in the regulation of cell growth, differentiation, migration and immune response. Phosphorylates tyrosine residues located in the C-terminal tails of Src-family kinases (SFKs) including LCK, SRC, HCK, FYN, LYN, CSK or YES1. Upon tail phosphorylation, Src-family members engage in intramolecular interactions between the phosphotyrosine tail and the SH2 domain that result in an inactive conformation. To inhibit SFKs, CSK is recruited to the plasma membrane via binding to transmembrane proteins or adapter proteins located near the plasma membrane. Suppresses signaling by various surface receptors, including T-cell receptor (TCR) and B-cell receptor (BCR) by phosphorylating and maintaining inactive several positive effectors such as FYN or LCK. The protein is Tyrosine-protein kinase CSK (CSK) of Homo sapiens (Human).